The chain runs to 383 residues: UDP-N-acetylglucosamine--N-acetylmuramyl-(pentapeptide) pyrophosphoryl-undecaprenol N-acetylglucosamine transferase (383 aa).

UDP-N-acetyl-alpha-D-glucosamine-binding positions include 11 to 13 (TGG), Asn-125, Arg-166, Ser-191, Ile-246, and Gln-291. A disordered region spans residues 364–383 (PNGRERTPIEAEKKAPRSNS). A compositionally biased stretch (basic and acidic residues) spans 366–383 (GRERTPIEAEKKAPRSNS).

Belongs to the glycosyltransferase 28 family. MurG subfamily.

The protein resides in the cell inner membrane. The enzyme catalyses di-trans,octa-cis-undecaprenyl diphospho-N-acetyl-alpha-D-muramoyl-L-alanyl-D-glutamyl-meso-2,6-diaminopimeloyl-D-alanyl-D-alanine + UDP-N-acetyl-alpha-D-glucosamine = di-trans,octa-cis-undecaprenyl diphospho-[N-acetyl-alpha-D-glucosaminyl-(1-&gt;4)]-N-acetyl-alpha-D-muramoyl-L-alanyl-D-glutamyl-meso-2,6-diaminopimeloyl-D-alanyl-D-alanine + UDP + H(+). It participates in cell wall biogenesis; peptidoglycan biosynthesis. Functionally, cell wall formation. Catalyzes the transfer of a GlcNAc subunit on undecaprenyl-pyrophosphoryl-MurNAc-pentapeptide (lipid intermediate I) to form undecaprenyl-pyrophosphoryl-MurNAc-(pentapeptide)GlcNAc (lipid intermediate II). This Myxococcus xanthus (strain DK1622) protein is UDP-N-acetylglucosamine--N-acetylmuramyl-(pentapeptide) pyrophosphoryl-undecaprenol N-acetylglucosamine transferase.